The chain runs to 750 residues: Photosystem I P700 chlorophyll a apoprotein A1 (750 aa).

8 helical membrane passes run 70 to 93, 156 to 179, 195 to 219, 291 to 309, 346 to 369, 385 to 411, 433 to 455, and 531 to 549; these read VFSA…FHGA, LYCT…FHYH, LNHH…HVSL, IAHH…GHMY, WHAQ…HHMY, LSLF…IFMV, AIIS…LYIH, and FLVH…LILL. The [4Fe-4S] cluster site is built by C573 and C582. A run of 2 helical transmembrane segments spans residues 589–610 and 664–686; these read HVFL…HFSW and LSAY…MFLF. H675 contacts chlorophyll a'. 2 residues coordinate chlorophyll a: M683 and Y691. W692 lines the phylloquinone pocket. A helical membrane pass occupies residues 724–744; it reads AVGVTHYLLGGIATTWAFFLA.

Belongs to the PsaA/PsaB family. As to quaternary structure, the PsaA/B heterodimer binds the P700 chlorophyll special pair and subsequent electron acceptors. PSI consists of a core antenna complex that captures photons, and an electron transfer chain that converts photonic excitation into a charge separation. The eukaryotic PSI reaction center is composed of at least 11 subunits. Requires P700 is a chlorophyll a/chlorophyll a' dimer, A0 is one or more chlorophyll a, A1 is one or both phylloquinones and FX is a shared 4Fe-4S iron-sulfur center. as cofactor.

Its subcellular location is the plastid. The protein localises to the chloroplast thylakoid membrane. The enzyme catalyses reduced [plastocyanin] + hnu + oxidized [2Fe-2S]-[ferredoxin] = oxidized [plastocyanin] + reduced [2Fe-2S]-[ferredoxin]. In terms of biological role, psaA and PsaB bind P700, the primary electron donor of photosystem I (PSI), as well as the electron acceptors A0, A1 and FX. PSI is a plastocyanin-ferredoxin oxidoreductase, converting photonic excitation into a charge separation, which transfers an electron from the donor P700 chlorophyll pair to the spectroscopically characterized acceptors A0, A1, FX, FA and FB in turn. Oxidized P700 is reduced on the lumenal side of the thylakoid membrane by plastocyanin. The sequence is that of Photosystem I P700 chlorophyll a apoprotein A1 from Liriodendron tulipifera (Tuliptree).